A 785-amino-acid polypeptide reads, in one-letter code: Potassium transporter 5 (785 aa).

At 1–60 (MDGEEHQIDGDEVNNHENKLNEKKKSWGKLYRPDSFIIEAGQTPTNTGRRSLMSWRTTMS) the chain is on the cytoplasmic side. S35 is subject to Phosphoserine. Residues 61-81 (LAFQSLGVVYGDIGTSPLYVY) traverse the membrane as a helical segment. Topologically, residues 82-97 (ASTFTDGINDKDDVVG) are extracellular. The helical transmembrane segment at 98-118 (VLSLIIYTITLVALLKYVFIV) threads the bilayer. Residues 119–184 (LQANDNGEGG…EKLENSKFAK (66 aa)) are Cytoplasmic-facing. A helical membrane pass occupies residues 185–205 (IILFLVTIMGTSMVIGDGILT). Residues 206–218 (PSISVLSAVSGIK) are Extracellular-facing. Residues 219–239 (SLGQNTVVGVSVAILIVLFAF) traverse the membrane as a helical segment. At 240–247 (QRFGTDKV) the chain is on the cytoplasmic side. The helical transmembrane segment at 248-268 (GFSFAPIILVWFTFLIGIGLF) threads the bilayer. Over 269–297 (NLFKHDITVLKALNPLYIIYYFRRTGRQG) the chain is Extracellular. Residues 298–318 (WISLGGVFLCITGTEAMFADL) form a helical membrane-spanning segment. Over 319–327 (GHFSVRAVQ) the chain is Cytoplasmic. The helical transmembrane segment at 328 to 348 (ISFSCVAYPALVTIYCGQAAY) threads the bilayer. Topologically, residues 349-367 (LTKHTYNVSNTFYDSIPDP) are extracellular. The N-linked (GlcNAc...) asparagine glycan is linked to N355. Residues 368 to 388 (LYWPTFVVAVAASIIASQAMI) form a helical membrane-spanning segment. The Cytoplasmic portion of the chain corresponds to 389-419 (SGAFSVISQSLRMGCFPRVKVVHTSAKYEGQ). The helical transmembrane segment at 420–440 (VYIPEINYLLMLACIAVTLAF) threads the bilayer. The Extracellular portion of the chain corresponds to 441–451 (RTTEKIGHAYG). Residues 452 to 472 (IAVVTVMVITTLMVTLIMLVI) traverse the membrane as a helical segment. The Cytoplasmic portion of the chain corresponds to 473–476 (WKTN). A helical membrane pass occupies residues 477 to 497 (IVWIAIFLVVFGSIEMLYLSS). The Extracellular segment spans residues 498–501 (VMYK). The helical transmembrane segment at 502-522 (FTSGGYLPLTITVVLMAMMAI) threads the bilayer. Residues 523–785 (WQYVHVLKYR…LLKVGMTYEL (263 aa)) are Cytoplasmic-facing. Residues 660-699 (GGEVDETDKEEEPNAETTVVPSSNYVPSSGRIGSAHSSSS) are disordered. Residues 662 to 673 (EVDETDKEEEPN) are compositionally biased toward acidic residues. The segment covering 674-686 (AETTVVPSSNYVP) has biased composition (polar residues). The segment covering 687–697 (SSGRIGSAHSS) has biased composition (low complexity).

The protein belongs to the HAK/KUP transporter (TC 2.A.72.3) family. In terms of assembly, interacts with ILK1. In terms of processing, phosphorylated at the N-terminus (amino acids 1-95) by CIPK23. Predominantly expressed in the roots.

The protein localises to the cell membrane. In terms of biological role, high-affinity potassium transporter. Can also transport rubidium and cesium. Is essential with AKT1 for high-affinity potassium uptake in roots during seedling establishment and postgermination growth under low potassium conditions. Mediates potassium uptake by plant roots in response to low potassium conditions, by a calcium-, CBL-, and CIPK-dependent pathway. Positively regulated by the calcium sensors calcineurin B-like genes CBL1, CBL8, CBL9 and CBL10, and by phosphorylation by CIPK23. In Arabidopsis thaliana (Mouse-ear cress), this protein is Potassium transporter 5 (POT5).